Consider the following 124-residue polypeptide: Small ribosomal subunit protein uS12 (124 aa).

The residue at position 89 (Asp-89) is a 3-methylthioaspartic acid.

Belongs to the universal ribosomal protein uS12 family. Part of the 30S ribosomal subunit. Contacts proteins S8 and S17. May interact with IF1 in the 30S initiation complex.

Its function is as follows. With S4 and S5 plays an important role in translational accuracy. In terms of biological role, interacts with and stabilizes bases of the 16S rRNA that are involved in tRNA selection in the A site and with the mRNA backbone. Located at the interface of the 30S and 50S subunits, it traverses the body of the 30S subunit contacting proteins on the other side and probably holding the rRNA structure together. The combined cluster of proteins S8, S12 and S17 appears to hold together the shoulder and platform of the 30S subunit. The chain is Small ribosomal subunit protein uS12 from Shewanella putrefaciens (strain CN-32 / ATCC BAA-453).